The following is a 97-amino-acid chain: Large ribosomal subunit protein uL23 (97 aa).

The protein belongs to the universal ribosomal protein uL23 family. As to quaternary structure, part of the 50S ribosomal subunit. Contacts protein L29, and trigger factor when it is bound to the ribosome.

Functionally, one of the early assembly proteins it binds 23S rRNA. One of the proteins that surrounds the polypeptide exit tunnel on the outside of the ribosome. Forms the main docking site for trigger factor binding to the ribosome. The chain is Large ribosomal subunit protein uL23 from Methylococcus capsulatus (strain ATCC 33009 / NCIMB 11132 / Bath).